The primary structure comprises 409 residues: Nucleoprotein (409 aa).

Disordered regions lie at residues 1–32, 45–69, 122–145, 164–194, and 238–259; these read MASG…SSGN, NSHP…QQHG, DVKS…LRFS, RSGR…GSED, and VDQV…DKMN. Over residues 15–31 the composition is skewed to low complexity; that stretch reads PVIKLGGPKPPKVGSSG. The interval 29–160 is RNA-binding; sequence SSGNASWFQA…GNFRWDFIPL (132 aa). The 126-residue stretch at 31 to 156 folds into the CoV N NTD domain; that stretch reads GNASWFQAIK…GGPDGNFRWD (126 aa). Over residues 122–138 the composition is skewed to basic and acidic residues; it reads DVKSRSHQGTRDPDKFD. The span at 164-179 shows a compositional bias: low complexity; the sequence is RSGRSTAASSAASSRA. 2 stretches are compositionally biased toward basic and acidic residues: residues 180–192 and 247–259; these read PSRD…RSGS and KGKE…DKMN. 2 positions are modified to phosphoserine; by host: Ser190 and Ser192. In terms of domain architecture, CoV N CTD spans 219-331; that stretch reads ADEMAHRRYC…QCVDGVGTRP (113 aa). Residues 226 to 333 form a dimerization region; sequence RYCKRTIPPG…VDGVGTRPKD (108 aa). Cys320 and Cys323 form a disulfide bridge. Positions 326–409 are disordered; the sequence is GVGTRPKDDE…GDSALGENEL (84 aa). Residues 341–357 are compositionally biased toward low complexity; that stretch reads RSSSRPATRTSSPAPRQ. Residues 358–367 are compositionally biased toward basic residues; sequence QRPKKEKKPK. The residue at position 378 (Thr378) is a Phosphothreonine; by host. Phosphoserine; by host is present on Ser379.

Belongs to the gammacoronavirus nucleocapsid protein family. Homooligomer. Both monomeric and oligomeric forms interact with RNA. Interacts with protein M. Interacts with NSP3; this interaction serves to tether the genome to the newly translated replicase-transcriptase complex at a very early stage of infection. Post-translationally, ADP-ribosylated. The ADP-ribosylation is retained in the virion during infection. In terms of processing, phosphorylated on serine and threonine residues.

The protein resides in the virion. It localises to the host endoplasmic reticulum-Golgi intermediate compartment. It is found in the host Golgi apparatus. In terms of biological role, packages the positive strand viral genome RNA into a helical ribonucleocapsid (RNP) and plays a fundamental role during virion assembly through its interactions with the viral genome and membrane protein M. Plays an important role in enhancing the efficiency of subgenomic viral RNA transcription as well as viral replication. This Avian infectious bronchitis virus (strain Arkansas 99) (IBV) protein is Nucleoprotein.